The primary structure comprises 152 residues: Probable spermine N(1)-acetyltransferase (152 aa).

The region spanning 3-152 (INIKAVTDDN…NGEKVMVKEL (150 aa)) is the N-acetyltransferase domain. Acetyl-CoA contacts are provided by residues 82–84 (FFI), 89–95 (QGKGLGK), and 122–131 (NIHAIRLYQR). Catalysis depends on tyrosine 129, which acts as the Proton donor.

Belongs to the acetyltransferase family.

It catalyses the reaction an alkane-alpha,omega-diamine + acetyl-CoA = an N-acetylalkane-alpha,omega-diamine + CoA + H(+). The catalysed reaction is spermine + acetyl-CoA = N(1)-acetylspermine + CoA + H(+). It participates in amine and polyamine degradation; spermine degradation. Probably acetylates spermine to N(1)-acetylspermine. This chain is Probable spermine N(1)-acetyltransferase, found in Bacillus subtilis subsp. natto (strain BEST195).